Consider the following 320-residue polypeptide: Olfactory receptor 51E2 (320 aa).

Residues 1 to 24 (MSSCNFTHATFMLIGIPGLEEAHF) lie on the Extracellular side of the membrane. An N-linked (GlcNAc...) asparagine glycan is attached at Asn-5. Residues 25 to 45 (WFGFPLLSMYAVALFGNCIVV) traverse the membrane as a helical segment. At 46-53 (FIVRTERS) the chain is on the cytoplasmic side. Residues 54–74 (LHAPMYLFLCMLAAIDLALST) form a helical membrane-spanning segment. Residues 75-98 (STMPKILALFWFDSREITFDACLA) lie on the Extracellular side of the membrane. Residues Cys-96 and Cys-178 are joined by a disulfide bond. The helical transmembrane segment at 99 to 119 (QMFFIHALSAIESTILLAMAF) threads the bilayer. Topologically, residues 120-138 (DRYVAICHPLRHAAVLNNT) are cytoplasmic. A helical transmembrane segment spans residues 139-159 (VTVQIGMVALVRGSLFFFPLP). Topologically, residues 160–195 (LLIKRLAFCHSNVLSHSYCVHQDVMKLAYTDTLPNV) are extracellular. Residues 196–216 (VYGLTAILLVMGVDVMFISLS) form a helical membrane-spanning segment. The Cytoplasmic portion of the chain corresponds to 217-236 (YFLIIRAVLQLPSKSERAKA). The helical transmembrane segment at 237–257 (FGTCVSHIGVVLAFYVPLIGL) threads the bilayer. The Extracellular segment spans residues 258 to 272 (SVVHRFGNSLDPIVH). Residues 273 to 293 (VLMGDVYLLLPPVINPIIYGA) traverse the membrane as a helical segment. The Cytoplasmic segment spans residues 294 to 320 (KTKQIRTRVLAMFKISCDKDIEAGGNT).

Belongs to the G-protein coupled receptor 1 family. Expressed in brain and liver. Expressed only in some areas of the brain and in the olfactory epithelium.

It is found in the cell membrane. The protein resides in the early endosome membrane. Functionally, olfactory receptor. The activity of this receptor is probably mediated by G-proteins which induce elevation of intracellular Ca(2+), cAMP and activation of phosphorylation of the protein kinases PKA and MAPK3/MAPK1. Activation of OR51E2 may affect melanocyte proliferation, differentiation, and melanogenesis and may increase proliferation and migration of primary retinal pigment epithelial (RPE) cells. Activated by the short chain fatty acids (SCFA), acetate and propionate. In response to SCFA, may positively regulate renin secretion and increase blood pressure. May also be activated by steroid hormones and regulate cell proliferation. Activated by L-lactate in glomus cells. This Rattus norvegicus (Rat) protein is Olfactory receptor 51E2 (Or51e2).